Consider the following 96-residue polypeptide: Large ribosomal subunit protein bL25 (96 aa).

Belongs to the bacterial ribosomal protein bL25 family. In terms of assembly, part of the 50S ribosomal subunit; part of the 5S rRNA/L5/L18/L25 subcomplex. Contacts the 5S rRNA. Binds to the 5S rRNA independently of L5 and L18.

This is one of the proteins that binds to the 5S RNA in the ribosome where it forms part of the central protuberance. The sequence is that of Large ribosomal subunit protein bL25 from Buchnera aphidicola subsp. Schizaphis graminum (strain Sg).